The sequence spans 275 residues: 3-methyl-2-oxobutanoate hydroxymethyltransferase (275 aa).

Mg(2+) is bound by residues Asp-49 and Asp-88. 3-methyl-2-oxobutanoate contacts are provided by residues Asp-49 to Ser-50, Asp-88, and Lys-118. Glu-120 serves as a coordination point for Mg(2+). Glu-187 acts as the Proton acceptor in catalysis.

It belongs to the PanB family. Homodecamer; pentamer of dimers. Mg(2+) is required as a cofactor.

Its subcellular location is the cytoplasm. It catalyses the reaction 3-methyl-2-oxobutanoate + (6R)-5,10-methylene-5,6,7,8-tetrahydrofolate + H2O = 2-dehydropantoate + (6S)-5,6,7,8-tetrahydrofolate. It functions in the pathway cofactor biosynthesis; (R)-pantothenate biosynthesis; (R)-pantoate from 3-methyl-2-oxobutanoate: step 1/2. In terms of biological role, catalyzes the reversible reaction in which hydroxymethyl group from 5,10-methylenetetrahydrofolate is transferred onto alpha-ketoisovalerate to form ketopantoate. This chain is 3-methyl-2-oxobutanoate hydroxymethyltransferase, found in Rhodospirillum centenum (strain ATCC 51521 / SW).